Here is a 483-residue protein sequence, read N- to C-terminus: Altronate oxidoreductase (483 aa).

Residue I18–A29 coordinates NAD(+).

It belongs to the mannitol dehydrogenase family. UxaB subfamily.

It catalyses the reaction D-altronate + NAD(+) = keto-D-tagaturonate + NADH + H(+). It functions in the pathway carbohydrate metabolism; pentose and glucuronate interconversion. This is Altronate oxidoreductase from Escherichia coli (strain 55989 / EAEC).